Consider the following 461-residue polypeptide: Diaboline synthase (461 aa).

Residues H185 and D400 each act as proton acceptor in the active site.

This sequence belongs to the plant acyltransferase family. In terms of assembly, monomer.

It localises to the cytoplasm. It catalyses the reaction 17,18-epoxy-17-hydroxycur-19-ene + acetyl-CoA = diaboline + CoA. The protein operates within alkaloid biosynthesis. Its function is as follows. Acetyltransferase involved in the biosynthesis of curare monoterpene indole alkaloids (MIAs), natural products such as diaboline, a pharmacologically active compound used to regulate blood pressure. Curare alkaloids act as animal glycine receptor antagonists. Catalyzes the conversion of 17,18-epoxy-17-hydroxycur-19-ene (Wieland-Gumlich aldehyde) to diaboline. The protein is Diaboline synthase of Strychnos sp.